Consider the following 505-residue polypeptide: Aspartyl/glutamyl-tRNA(Asn/Gln) amidotransferase subunit B (505 aa).

The protein belongs to the GatB/GatE family. GatB subfamily. In terms of assembly, heterotrimer of A, B and C subunits.

It catalyses the reaction L-glutamyl-tRNA(Gln) + L-glutamine + ATP + H2O = L-glutaminyl-tRNA(Gln) + L-glutamate + ADP + phosphate + H(+). It carries out the reaction L-aspartyl-tRNA(Asn) + L-glutamine + ATP + H2O = L-asparaginyl-tRNA(Asn) + L-glutamate + ADP + phosphate + 2 H(+). Functionally, allows the formation of correctly charged Asn-tRNA(Asn) or Gln-tRNA(Gln) through the transamidation of misacylated Asp-tRNA(Asn) or Glu-tRNA(Gln) in organisms which lack either or both of asparaginyl-tRNA or glutaminyl-tRNA synthetases. The reaction takes place in the presence of glutamine and ATP through an activated phospho-Asp-tRNA(Asn) or phospho-Glu-tRNA(Gln). This is Aspartyl/glutamyl-tRNA(Asn/Gln) amidotransferase subunit B from Dinoroseobacter shibae (strain DSM 16493 / NCIMB 14021 / DFL 12).